Reading from the N-terminus, the 486-residue chain is Zinc finger chaperone ZPR1 (486 aa).

The interval 1–31 is disordered; it reads MSEQKEDLFKPVGEAAAEVEDESIAEQNKAN. Residue S23 is modified to Phosphoserine. C4-type zinc fingers lie at residues 54 to 86 and 295 to 327; these read CMNC…CPHC and CPSC…CDHC. Position 407 is a phosphothreonine (T407).

It belongs to the ZPR1 family. Interacts with elongation factor 1-alpha.

It is found in the cytoplasm. Its subcellular location is the nucleus. Its function is as follows. Acts as a protein folding chaperone for elongation factor 1-alpha. This Saccharomyces cerevisiae (strain ATCC 204508 / S288c) (Baker's yeast) protein is Zinc finger chaperone ZPR1.